A 450-amino-acid chain; its full sequence is F-box/FBD/LRR-repeat protein At5g22660 (450 aa).

The region spanning 12–58 (EDRISSLPDHLLSQILSNLPTENAVTTSILSTRWKDLWLSTPVLDID) is the F-box domain. LRR repeat units follow at residues 157 to 181 (LPNL…KFIS) and 294 to 317 (LSSL…LKHE). Positions 364–416 (EEISLSSSVPKCLQSSLENVEIIRPNYGSGEEMKLSKYFLENSLVLKKFKLCR) constitute an FBD domain.

The chain is F-box/FBD/LRR-repeat protein At5g22660 from Arabidopsis thaliana (Mouse-ear cress).